A 555-amino-acid polypeptide reads, in one-letter code: Sulfite reductase [ferredoxin] 1 (555 aa).

A cross-link (3'-(S-cysteinyl)-tyrosine (Tyr-Cys)) is located at residues 69-161; the sequence is YTQREQGYDG…SVGLQTTEAC (93 aa). [4Fe-4S] cluster-binding residues include C417, C423, C463, and C467. C467 provides a ligand contact to siroheme.

The protein belongs to the nitrite and sulfite reductase 4Fe-4S domain family. As to quaternary structure, monomer. It depends on siroheme as a cofactor. The cofactor is [4Fe-4S] cluster.

It catalyses the reaction hydrogen sulfide + 6 oxidized [2Fe-2S]-[ferredoxin] + 3 H2O = sulfite + 6 reduced [2Fe-2S]-[ferredoxin] + 7 H(+). In terms of biological role, catalyzes the reduction of sulfite to sulfide, a step in the biosynthesis of sulfur-containing amino acids and cofactors. This Mycolicibacterium paratuberculosis (strain ATCC BAA-968 / K-10) (Mycobacterium paratuberculosis) protein is Sulfite reductase [ferredoxin] 1 (sir1).